Consider the following 429-residue polypeptide: MKLYNLKDHNEQVSFAQAIKQGLGKQQGLFFPLDLPEFELTEIDHLLEQDFVTRSSRILSAFIGEEVPETALKKRVQAAFEFPAPVAKVTDDVSCLELFHGPTLAFKDFGGRFMAQMLAEVAGEQPVTILTATSGDTGAAVAHAFYGLKNVRVVILYPQGKISPLQEKLFCTLGGNIHTVAIDGDFDACQALVKQAFDDQELKDALHLNSANSINISRLLAQICYYFEAVAQLPQEARNQLVISVPSGNFGDLTAGLLAKSLGLPVKRFIAATNANDTVPRFLTSGQWQPHATVATLSNAMDVSQPNNWPRVEELFRRKVWQLKELGHAAVSDETTKDTMRELAELGYISEPHAAIAYRALRDQLQEGEFGLFLGTAHPAKFKESVEAILGQELPLPKALALRAELPLLSHTLPASFGELRKFLMGLPA.

Lys107 bears the N6-(pyridoxal phosphate)lysine mark.

It belongs to the threonine synthase family. Pyridoxal 5'-phosphate is required as a cofactor.

The catalysed reaction is O-phospho-L-homoserine + H2O = L-threonine + phosphate. It participates in amino-acid biosynthesis; L-threonine biosynthesis; L-threonine from L-aspartate: step 5/5. In terms of biological role, catalyzes the gamma-elimination of phosphate from L-phosphohomoserine and the beta-addition of water to produce L-threonine. The chain is Threonine synthase (thrC) from Serratia marcescens.